The sequence spans 337 residues: Glyceraldehyde-3-phosphate dehydrogenase (337 aa).

Residues 12–13, Asp34, and Arg79 contribute to the NAD(+) site; that span reads RI. D-glyceraldehyde 3-phosphate is bound by residues 150-152, Thr181, 210-211, and Arg233; these read SCT and TG. The active-site Nucleophile is Cys151. Asn315 contacts NAD(+).

It belongs to the glyceraldehyde-3-phosphate dehydrogenase family. In terms of assembly, homotetramer.

It is found in the cytoplasm. It catalyses the reaction D-glyceraldehyde 3-phosphate + phosphate + NAD(+) = (2R)-3-phospho-glyceroyl phosphate + NADH + H(+). The protein operates within carbohydrate degradation; glycolysis; pyruvate from D-glyceraldehyde 3-phosphate: step 1/5. In Coccidioides posadasii (strain C735) (Valley fever fungus), this protein is Glyceraldehyde-3-phosphate dehydrogenase (GPD).